The primary structure comprises 449 residues: Chromosomal replication initiator protein DnaA (449 aa).

The domain I, interacts with DnaA modulators stretch occupies residues Met1–Thr83. The segment at Glu77 to Leu114 is disordered. The tract at residues Thr83–Ser112 is domain II. Positions Ala89–Ala99 are enriched in low complexity. The tract at residues Asn113–Ala329 is domain III, AAA+ region. Residues Gly157, Gly159, Lys160, and Thr161 each contribute to the ATP site. The interval Gln330–Thr449 is domain IV, binds dsDNA.

It belongs to the DnaA family. As to quaternary structure, oligomerizes as a right-handed, spiral filament on DNA at oriC.

The protein localises to the cytoplasm. In terms of biological role, plays an essential role in the initiation and regulation of chromosomal replication. ATP-DnaA binds to the origin of replication (oriC) to initiate formation of the DNA replication initiation complex once per cell cycle. Binds the DnaA box (a 9 base pair repeat at the origin) and separates the double-stranded (ds)DNA. Forms a right-handed helical filament on oriC DNA; dsDNA binds to the exterior of the filament while single-stranded (ss)DNA is stabiized in the filament's interior. The ATP-DnaA-oriC complex binds and stabilizes one strand of the AT-rich DNA unwinding element (DUE), permitting loading of DNA polymerase. After initiation quickly degrades to an ADP-DnaA complex that is not apt for DNA replication. Binds acidic phospholipids. This Halorhodospira halophila (strain DSM 244 / SL1) (Ectothiorhodospira halophila (strain DSM 244 / SL1)) protein is Chromosomal replication initiator protein DnaA.